The primary structure comprises 100 residues: Replication restart protein PriB (100 aa).

Residues 4–99 enclose the SSB domain; sequence TNLVSLAALI…LRIQNIKEYK (96 aa).

This sequence belongs to the PriB family. As to quaternary structure, homodimer. Component of the replication restart primosome. Primosome assembly occurs via a 'hand-off' mechanism. PriA binds to replication forks, subsequently PriB then DnaT bind; DnaT then displaces ssDNA to generate the helicase loading substrate. Interacts with PriA with high affinity, independent of DNA presence.

Its activity is regulated as follows. PriA:PriB complex-catalyzed duplex DNA winding is inhibited by CGS 15943 (CHEBI:131351); PriA is the drug target. Its function is as follows. Stimulates the DNA unwinding activity of PriA helicase, which does not seem to require single-stranded (ss)DNA-binding by PriB. Activates DNA-dependent ATP hydrolysis catalyzed by PriA. Weakly binds ssDNA. Weakly binds double-stranded (ds)DNA, a partial duplex DNA with a 3' ssDNA overhang, and a forked DNA structure with fully duplex leading and lagging strand arms in vitro. Involved in the restart of stalled replication forks, which reloads the replicative helicase on sites other than the origin of replication; the PriA-PriB pathway is the major replication restart pathway. During primosome assembly it facilitates complex formation between PriA and DnaT on DNA; stabilizes PriA on DNA. Stimulates the DNA unwinding activity of PriA helicase. This Neisseria gonorrhoeae (strain ATCC 700825 / FA 1090) protein is Replication restart protein PriB.